Consider the following 412-residue polypeptide: Multifunctional CCA protein (412 aa).

Residues Gly8 and Arg11 each coordinate ATP. CTP contacts are provided by Gly8 and Arg11. Residues Asp21 and Asp23 each coordinate Mg(2+). Arg91, Arg137, and Arg140 together coordinate ATP. Positions 91, 137, and 140 each coordinate CTP. Residues 228-329 (TGIHTLMTLS…VKLFDSIDAW (102 aa)) form the HD domain.

This sequence belongs to the tRNA nucleotidyltransferase/poly(A) polymerase family. Bacterial CCA-adding enzyme type 1 subfamily. In terms of assembly, monomer. Can also form homodimers and oligomers. The cofactor is Mg(2+). Ni(2+) is required as a cofactor.

It carries out the reaction a tRNA precursor + 2 CTP + ATP = a tRNA with a 3' CCA end + 3 diphosphate. It catalyses the reaction a tRNA with a 3' CCA end + 2 CTP + ATP = a tRNA with a 3' CCACCA end + 3 diphosphate. Catalyzes the addition and repair of the essential 3'-terminal CCA sequence in tRNAs without using a nucleic acid template. Adds these three nucleotides in the order of C, C, and A to the tRNA nucleotide-73, using CTP and ATP as substrates and producing inorganic pyrophosphate. tRNA 3'-terminal CCA addition is required both for tRNA processing and repair. Also involved in tRNA surveillance by mediating tandem CCA addition to generate a CCACCA at the 3' terminus of unstable tRNAs. While stable tRNAs receive only 3'-terminal CCA, unstable tRNAs are marked with CCACCA and rapidly degraded. The sequence is that of Multifunctional CCA protein from Escherichia coli O7:K1 (strain IAI39 / ExPEC).